The chain runs to 949 residues: AP-1 complex subunit beta-1 (949 aa).

Lysine 318 is subject to N6-acetyllysine. The residue at position 574 (tyrosine 574) is a 3'-nitrotyrosine. The tract at residues 592 to 623 (SLPPRTASSESTESPEAAPAGAPASDQPDVIP) is disordered. Residues 594–616 (PPRTASSESTESPEAAPAGAPAS) are compositionally biased toward low complexity.

The protein belongs to the adaptor complexes large subunit family. As to quaternary structure, adaptor protein complex 1 (AP-1) is a heterotetramer composed of two large adaptins (gamma-type subunit AP1G1 and beta-type subunit AP1B1), a medium adaptin (mu-type subunit AP1M1 or AP1M2) and a small adaptin (sigma-type subunit AP1S1 or AP1S2 or AP1S3). The N-terminus is blocked.

It localises to the golgi apparatus. Its subcellular location is the cytoplasmic vesicle. The protein localises to the clathrin-coated vesicle membrane. Functionally, subunit of clathrin-associated adaptor protein complex 1 that plays a role in protein sorting in the late-Golgi/trans-Golgi network (TGN) and/or endosomes. The AP complexes mediate both the recruitment of clathrin to membranes and the recognition of sorting signals within the cytosolic tails of transmembrane cargo molecules. This is AP-1 complex subunit beta-1 (Ap1b1) from Rattus norvegicus (Rat).